The sequence spans 264 residues: NAD kinase (264 aa).

Aspartate 45 (proton acceptor) is an active-site residue. Residues 45-46 (DG), 121-122 (NE), arginine 147, aspartate 149, alanine 184, and glutamine 221 contribute to the NAD(+) site.

It belongs to the NAD kinase family. Requires a divalent metal cation as cofactor.

It is found in the cytoplasm. It carries out the reaction NAD(+) + ATP = ADP + NADP(+) + H(+). In terms of biological role, involved in the regulation of the intracellular balance of NAD and NADP, and is a key enzyme in the biosynthesis of NADP. Catalyzes specifically the phosphorylation on 2'-hydroxyl of the adenosine moiety of NAD to yield NADP. This is NAD kinase from Leuconostoc mesenteroides subsp. mesenteroides (strain ATCC 8293 / DSM 20343 / BCRC 11652 / CCM 1803 / JCM 6124 / NCDO 523 / NBRC 100496 / NCIMB 8023 / NCTC 12954 / NRRL B-1118 / 37Y).